Here is a 165-residue protein sequence, read N- to C-terminus: Chorismate pyruvate-lyase (165 aa).

Substrate is bound by residues M35, R77, L115, and E156.

Belongs to the UbiC family. Monomer.

It localises to the cytoplasm. It carries out the reaction chorismate = 4-hydroxybenzoate + pyruvate. Its pathway is cofactor biosynthesis; ubiquinone biosynthesis. Its function is as follows. Removes the pyruvyl group from chorismate, with concomitant aromatization of the ring, to provide 4-hydroxybenzoate (4HB) for the ubiquinone pathway. The polypeptide is Chorismate pyruvate-lyase (Citrobacter koseri (strain ATCC BAA-895 / CDC 4225-83 / SGSC4696)).